The following is a 78-amino-acid chain: Exodeoxyribonuclease 7 small subunit (78 aa).

This sequence belongs to the XseB family. As to quaternary structure, heterooligomer composed of large and small subunits.

The protein localises to the cytoplasm. It catalyses the reaction Exonucleolytic cleavage in either 5'- to 3'- or 3'- to 5'-direction to yield nucleoside 5'-phosphates.. Bidirectionally degrades single-stranded DNA into large acid-insoluble oligonucleotides, which are then degraded further into small acid-soluble oligonucleotides. This is Exodeoxyribonuclease 7 small subunit from Oceanobacillus iheyensis (strain DSM 14371 / CIP 107618 / JCM 11309 / KCTC 3954 / HTE831).